The following is a 204-amino-acid chain: Somatotropin (204 aa).

The first 17 residues, 1-17 (MNSVVLQLSVVCLGVSS), serve as a signal peptide directing secretion. Gln-18 bears the Pyrrolidone carboxylic acid mark. Residue His-36 coordinates Zn(2+). An intrachain disulfide couples Cys-69 to Cys-177. A Zn(2+)-binding site is contributed by Glu-186. Cysteines 194 and 202 form a disulfide.

This sequence belongs to the somatotropin/prolactin family.

The protein localises to the secreted. Functionally, growth hormone plays an important role in growth control and involved in the regulation of several anabolic processes. This is Somatotropin (gh) from Oreochromis mossambicus (Mozambique tilapia).